The following is a 339-amino-acid chain: Uridylate kinase PUMPKIN, chloroplastic (339 aa).

Residues 1 to 53 (MAIPLPLTSCSPISTSSSISRTSFVPLTLRNRTFFSNQNYSRRVLISCSSSLS) constitute a chloroplast transit peptide. Over residues 52 to 79 (LSSDNGSSPDSMNGNGNGNGSSLNGQSS) the composition is skewed to low complexity. The disordered stretch occupies residues 52-89 (LSSDNGSSPDSMNGNGNGNGSSLNGQSSFPRLPSFDGT). An ATP-binding site is contributed by 102–105 (KVSG). The interval 110–115 (GDEEQN) is involved in allosteric activation by GTP. Residue Gly144 participates in UMP binding. Positions 145 and 149 each coordinate ATP. Asp165 is a UMP binding site. ATP-binding positions include 180 to 184 (QATME) and 189 to 191 (PTR). 226 to 233 (TGNPFFTT) contacts UMP. The ATP site is built by Thr253, Phe259, and Asp262.

The protein belongs to the UMP kinase family. As to quaternary structure, homomultimer. Homohexamer. Forms RNA-containing megadalton-sized complexes. As to expression, expressed exclusively in leaves, but not in roots.

It is found in the plastid. Its subcellular location is the chloroplast stroma. It carries out the reaction UMP + ATP = UDP + ADP. It participates in pyrimidine metabolism; CTP biosynthesis via de novo pathway; UDP from UMP (UMPK route): step 1/1. Its function is as follows. Catalyzes the reversible phosphorylation of UMP to UDP. Required for specific post-transcriptional processes of many plastid transcripts (e.g. PSI (PsaA, PsaF), PSII (D1, CP43, CP47), Cytochrome b(6)f (Cytb(6)), ATP synthase (AtpC), LHCs (LHCa3, LHCb2), and NDH (NdhH)), thus being essential for retaining photosynthetic activity in chloroplasts. Associates with group II introns of the plastid transcripts trnG-UCC, trnV-UAC, petB, petD and ndhA to stabilize corresponding precursor RNAs. The sequence is that of Uridylate kinase PUMPKIN, chloroplastic from Arabidopsis thaliana (Mouse-ear cress).